Reading from the N-terminus, the 423-residue chain is UDP-N-acetylglucosamine 1-carboxyvinyltransferase (423 aa).

Residue 22 to 23 (KN) coordinates phosphoenolpyruvate. A UDP-N-acetyl-alpha-D-glucosamine-binding site is contributed by Arg-93. Cys-117 serves as the catalytic Proton donor. Cys-117 carries the 2-(S-cysteinyl)pyruvic acid O-phosphothioketal modification. UDP-N-acetyl-alpha-D-glucosamine is bound by residues 122–126 (RPIDL), Asp-307, and Val-329.

Belongs to the EPSP synthase family. MurA subfamily.

The protein resides in the cytoplasm. The catalysed reaction is phosphoenolpyruvate + UDP-N-acetyl-alpha-D-glucosamine = UDP-N-acetyl-3-O-(1-carboxyvinyl)-alpha-D-glucosamine + phosphate. The protein operates within cell wall biogenesis; peptidoglycan biosynthesis. Cell wall formation. Adds enolpyruvyl to UDP-N-acetylglucosamine. In Chlorobium chlorochromatii (strain CaD3), this protein is UDP-N-acetylglucosamine 1-carboxyvinyltransferase.